Here is a 173-residue protein sequence, read N- to C-terminus: Dual-action ribosomal maturation protein DarP (173 aa).

It belongs to the DarP family.

Its subcellular location is the cytoplasm. Functionally, member of a network of 50S ribosomal subunit biogenesis factors which assembles along the 30S-50S interface, preventing incorrect 23S rRNA structures from forming. Promotes peptidyl transferase center (PTC) maturation. The sequence is that of Dual-action ribosomal maturation protein DarP from Pseudomonas syringae pv. tomato (strain ATCC BAA-871 / DC3000).